The following is a 153-amino-acid chain: Flagellar assembly factor FliW (153 aa).

The protein belongs to the FliW family. Interacts with translational regulator CsrA and flagellin(s).

It is found in the cytoplasm. Acts as an anti-CsrA protein, binds CsrA and prevents it from repressing translation of its target genes, one of which is flagellin. Binds to flagellin and participates in the assembly of the flagellum. The sequence is that of Flagellar assembly factor FliW from Heliobacterium modesticaldum (strain ATCC 51547 / Ice1).